A 231-amino-acid polypeptide reads, in one-letter code: UPF0758 protein YsxA (231 aa).

The 123-residue stretch at 109-231 (VIRSPEDGAN…FVSLKEKGYL (123 aa)) folds into the MPN domain. The Zn(2+) site is built by His-180, His-182, and Asp-193. The short motif at 180–193 (HNHPSGDPTPSRED) is the JAMM motif element.

This sequence belongs to the UPF0758 family.

The protein is UPF0758 protein YsxA (ysxA) of Bacillus subtilis (strain 168).